Consider the following 581-residue polypeptide: Proline--tRNA ligase (581 aa).

It belongs to the class-II aminoacyl-tRNA synthetase family. ProS type 1 subfamily. Homodimer.

The protein resides in the cytoplasm. The enzyme catalyses tRNA(Pro) + L-proline + ATP = L-prolyl-tRNA(Pro) + AMP + diphosphate. Its function is as follows. Catalyzes the attachment of proline to tRNA(Pro) in a two-step reaction: proline is first activated by ATP to form Pro-AMP and then transferred to the acceptor end of tRNA(Pro). As ProRS can inadvertently accommodate and process non-cognate amino acids such as alanine and cysteine, to avoid such errors it has two additional distinct editing activities against alanine. One activity is designated as 'pretransfer' editing and involves the tRNA(Pro)-independent hydrolysis of activated Ala-AMP. The other activity is designated 'posttransfer' editing and involves deacylation of mischarged Ala-tRNA(Pro). The misacylated Cys-tRNA(Pro) is not edited by ProRS. This is Proline--tRNA ligase from Methylibium petroleiphilum (strain ATCC BAA-1232 / LMG 22953 / PM1).